The following is a 215-amino-acid chain: Nucleoside triphosphate pyrophosphatase (215 aa).

Catalysis depends on aspartate 77, which acts as the Proton acceptor.

Belongs to the Maf family. Requires a divalent metal cation as cofactor.

Its subcellular location is the cytoplasm. It catalyses the reaction a ribonucleoside 5'-triphosphate + H2O = a ribonucleoside 5'-phosphate + diphosphate + H(+). The enzyme catalyses a 2'-deoxyribonucleoside 5'-triphosphate + H2O = a 2'-deoxyribonucleoside 5'-phosphate + diphosphate + H(+). In terms of biological role, nucleoside triphosphate pyrophosphatase. May have a dual role in cell division arrest and in preventing the incorporation of modified nucleotides into cellular nucleic acids. The polypeptide is Nucleoside triphosphate pyrophosphatase (Rickettsia peacockii (strain Rustic)).